Consider the following 97-residue polypeptide: Aspartyl/glutamyl-tRNA(Asn/Gln) amidotransferase subunit C (97 aa).

A disordered region spans residues 74–97; sequence AEQALDQAPASQRDRFEVPRILGE. A compositionally biased stretch (basic and acidic residues) spans 85–97; it reads QRDRFEVPRILGE.

The protein belongs to the GatC family. Heterotrimer of A, B and C subunits.

It catalyses the reaction L-glutamyl-tRNA(Gln) + L-glutamine + ATP + H2O = L-glutaminyl-tRNA(Gln) + L-glutamate + ADP + phosphate + H(+). It carries out the reaction L-aspartyl-tRNA(Asn) + L-glutamine + ATP + H2O = L-asparaginyl-tRNA(Asn) + L-glutamate + ADP + phosphate + 2 H(+). Its function is as follows. Allows the formation of correctly charged Asn-tRNA(Asn) or Gln-tRNA(Gln) through the transamidation of misacylated Asp-tRNA(Asn) or Glu-tRNA(Gln) in organisms which lack either or both of asparaginyl-tRNA or glutaminyl-tRNA synthetases. The reaction takes place in the presence of glutamine and ATP through an activated phospho-Asp-tRNA(Asn) or phospho-Glu-tRNA(Gln). The chain is Aspartyl/glutamyl-tRNA(Asn/Gln) amidotransferase subunit C from Corynebacterium kroppenstedtii (strain DSM 44385 / JCM 11950 / CIP 105744 / CCUG 35717).